The chain runs to 1357 residues: MAYSYTEKKRIRKDFSKLPDVMDVPYLLAIQLDSYREFLQAGATKDQFRDVGLHAAFKSVFPIISYSGNAALEYVGYRLGEPAFDVKECVLRGVTFAVPLRVKVRLIIFDKESSNKAIKDIKEQEVYMGEIPLMTENGTFVINGTERVIVSQLHRSPGVFFDHDRGKTHSSGKLLYSARIIPYRGSWLDFEFDPKDCVFVRIDRRRKLPASVLLRALGYTTEEVLDAFYTTNVFHVKGEGLSLELVPQRLRGEVAVLDIQDDKGKVIVEQGRRITARHINQLEKAGIKELDVPLDYVLGRTTAKAIVHPATGEILAECNTELSTEILAKIAKAGVVRIETLYTNDIDCGPFVSDTLKIDSTSNQLEALVEIYRMMRPGEPPTKDAAETLFNNLFFSPERYDLSAVGRMKFNRRIGRTEIEGSGVLCKEDIVAVLKTLVDIRNGKGIVDDIDHLGNRRVRCVGEMAENQFRVGLVRVERAVKERLSMAESEGLMPQDLINAKPVAAAVKEFFGSSQLSQFMDQNNPLSEITHKRRVSALGPGGLTRERAGFEVRDVHPTHYGRVCPIETPEGPNIGLINSLAAYARTNQYGFLESPYRVVKEGVVTDDIVFLSAIEEADHVIAQASATMNEQKVLIDELVAVRHLNEFTVKAPEDVTLMDVSPKQVVSVAASLIPFLEHDDANRALMGSNMQRQAVPTLRADKPLVGTGMERNVARDSGVCVVARRGGVIDSVDASRIVVRVADDEVETGEAGVDIYNLTKYTRSNQNTCINQRPLVSKGDRVQRSDIMADGPSTDMGELALGQNMRIAFMAWNGFNFEDSICLSERVVQEDRFTTIHIQELTCVARDTKLGPEEITADIPNVGEAALNKLDEAGIVYVGAEVGAGDILVGKVTPKGETQLTPEEKLLRAIFGEKASDVKDTSLRVPTGTKGTVIDVQVFTRDGVERDARALSIEKSQLDEIRKDLNEEFRIVEGATFERLRSALVGHKAEGGAGLKKGQDITDEVLDGLEHGQWFKLRMAEDALNEQLEKAQAYIVDRRRLLDDKFEDKKRKLQQGDDLAPGVLKIVKVYLAIRRRIQPGDKMAGRHGNKGVVSVIMPVEDMPHDANGTPVDVVLNPLGVPSRMNVGQILETHLGLAAKGLGEKINRMVEEQRKVAELRTFLDEIYNQIGGRNEDLDSFSDQEILDLAKNLRGGVPMATPVFDGAKESEIKAMLKLADLPESGQMQLTDGRTGNKFERPVTVGYMYMLKLNHLVDDKMHARSTGSYSLVTQQPLGGKAQFGGQRFGEMEVWALEAYGAAYTLQEMLTVKSDDVNGRTKMYKNIVDGDHRMEPGMPESFNVLIKEIRSLGIDIDLETE.

It belongs to the RNA polymerase beta chain family. In terms of assembly, the RNAP catalytic core consists of 2 alpha, 1 beta, 1 beta' and 1 omega subunit. When a sigma factor is associated with the core the holoenzyme is formed, which can initiate transcription.

It catalyses the reaction RNA(n) + a ribonucleoside 5'-triphosphate = RNA(n+1) + diphosphate. In terms of biological role, DNA-dependent RNA polymerase catalyzes the transcription of DNA into RNA using the four ribonucleoside triphosphates as substrates. This Pseudomonas fluorescens (strain Pf0-1) protein is DNA-directed RNA polymerase subunit beta.